The sequence spans 350 residues: Guanine nucleotide-binding protein G(t) subunit alpha-1 (350 aa).

The segment at 1–21 (MGAGASAEEKHSRELEKKLKE) is disordered. A lipid anchor (N-myristoyl glycine) is attached at glycine 2. A compositionally biased stretch (basic and acidic residues) spans 7–21 (AEEKHSRELEKKLKE). The G-alpha domain maps to 28-350 (RTVKLLLLGA…KENLKDCGLF (323 aa)). The interval 31 to 44 (KLLLLGAGESGKST) is G1 motif. 36–43 (GAGESGKS) provides a ligand contact to GTP. Serine 43 contributes to the Mg(2+) binding site. Tyrosine 142 bears the Phosphotyrosine mark. GTP contacts are provided by residues aspartate 146, 171 to 177 (LRSRVKT), glycine 199, 265 to 268 (NKKD), and alanine 322. A G2 motif region spans residues 169-177 (DVLRSRVKT). Threonine 177 contributes to the Mg(2+) binding site. The G3 motif stretch occupies residues 192 to 201 (FRMFDVGGQR). Positions 261 to 268 (VLFLNKKD) are G4 motif. The segment at 320-325 (TCATDT) is G5 motif. Residues 340 to 350 (IKENLKDCGLF) are interaction with RHO.

It belongs to the G-alpha family. G(i/o/t/z) subfamily. As to quaternary structure, heterotrimeric G proteins are composed of 3 subunits alpha, beta and gamma. The alpha chain contains the guanine nucleotide binding site. Interacts with RHO. Interacts with RGS9 and PDE6G. Interacts (when myristoylated) with UNC119; interaction is required for localization in sensory neurons. In the retina, expressed in the rod photoreceptors.

The protein resides in the cell projection. Its subcellular location is the cilium. The protein localises to the photoreceptor outer segment. It is found in the membrane. It localises to the photoreceptor inner segment. Functions as a signal transducer for the rod photoreceptor RHO. Required for normal RHO-mediated light perception by the retina. Guanine nucleotide-binding proteins (G proteins) function as transducers downstream of G protein-coupled receptors (GPCRs), such as the photoreceptor RHO. The alpha chain contains the guanine nucleotide binding site and alternates between an active, GTP-bound state and an inactive, GDP-bound state. Activated RHO promotes GDP release and GTP binding. Signaling is mediated via downstream effector proteins, such as cGMP-phosphodiesterase. The protein is Guanine nucleotide-binding protein G(t) subunit alpha-1 (Gnat1) of Mus musculus (Mouse).